A 79-amino-acid polypeptide reads, in one-letter code: uncharacterized protein (79 aa).

This is an uncharacterized protein from Bacillus subtilis (strain 168).